The primary structure comprises 360 residues: Cinnamyl alcohol dehydrogenase 2 (360 aa).

An Enoyl reductase (ER) domain is found at 23–351 (GVLSPFNFSR…KADVKYRFVI (329 aa)). Cys-50 is a Zn(2+) binding site. Ser-52 lines the an alcohol pocket. Ser-52 is a binding site for NADP(+). Positions 53, 72, 73, 103, 106, 109, 117, and 166 each coordinate Zn(2+). An an alcohol-binding site is contributed by His-72. NADP(+) is bound by residues Leu-192, Gly-194, Leu-195, Ser-214, Thr-215, Ser-216, Lys-219, Lys-220, Val-277, Ala-279, Ser-301, and Arg-348.

The protein belongs to the zinc-containing alcohol dehydrogenase family. Class-P subfamily. In terms of assembly, homodimer. It depends on Zn(2+) as a cofactor. As to expression, mainly expressed in young roots and, to a lower extent, in stems and leaves.

It is found in the cytoplasm. It carries out the reaction (E)-cinnamyl alcohol + NADP(+) = (E)-cinnamaldehyde + NADPH + H(+). Functionally, alcohol dehydrogenase that catalyzes the conversion of (E)-cinnamyl alcohol to (E)-cinnamaldehyde. The chain is Cinnamyl alcohol dehydrogenase 2 from Rauvolfia serpentina (Serpentine wood).